The primary structure comprises 1003 residues: Glycine--tRNA ligase (1003 aa).

Residues 1 to 310 form a glycine--tRNA ligase alpha subunit region; sequence MSSQPLTLQT…VTPKKIPTIC (310 aa). The glycine--tRNA ligase beta subunit stretch occupies residues 311-1003; the sequence is QPEDFLLEIG…CFGFYAWGVL (693 aa).

It belongs to the class-II aminoacyl-tRNA synthetase family.

The protein resides in the cytoplasm. It carries out the reaction tRNA(Gly) + glycine + ATP = glycyl-tRNA(Gly) + AMP + diphosphate. This chain is Glycine--tRNA ligase (glyQS), found in Chlamydia trachomatis serovar D (strain ATCC VR-885 / DSM 19411 / UW-3/Cx).